The chain runs to 356 residues: GTPase Obg (356 aa).

Residues 1-158 enclose the Obg domain; the sequence is MFIDSVKITL…RLVRLELKLI (158 aa). The OBG-type G domain maps to 159 to 339; the sequence is ADVGLVGFPN…LKFMLLEEIK (181 aa). GTP is bound by residues 165–172, 190–194, 212–215, 280–283, and 320–322; these read GFPNVGKS, FTTLT, DIPG, SKSD, and SSL. Mg(2+) contacts are provided by Ser-172 and Thr-192.

This sequence belongs to the TRAFAC class OBG-HflX-like GTPase superfamily. OBG GTPase family. As to quaternary structure, monomer. Requires Mg(2+) as cofactor.

The protein resides in the cytoplasm. Functionally, an essential GTPase which binds GTP, GDP and possibly (p)ppGpp with moderate affinity, with high nucleotide exchange rates and a fairly low GTP hydrolysis rate. Plays a role in control of the cell cycle, stress response, ribosome biogenesis and in those bacteria that undergo differentiation, in morphogenesis control. The sequence is that of GTPase Obg from Campylobacter jejuni subsp. jejuni serotype O:23/36 (strain 81-176).